The chain runs to 346 residues: Methylthioribose-1-phosphate isomerase (346 aa).

Substrate is bound by residues 54–56 (RGA), R91, and Q192. Catalysis depends on D233, which acts as the Proton donor. 243 to 244 (NK) serves as a coordination point for substrate.

It belongs to the eIF-2B alpha/beta/delta subunits family. MtnA subfamily.

It carries out the reaction 5-(methylsulfanyl)-alpha-D-ribose 1-phosphate = 5-(methylsulfanyl)-D-ribulose 1-phosphate. It functions in the pathway amino-acid biosynthesis; L-methionine biosynthesis via salvage pathway; L-methionine from S-methyl-5-thio-alpha-D-ribose 1-phosphate: step 1/6. Functionally, catalyzes the interconversion of methylthioribose-1-phosphate (MTR-1-P) into methylthioribulose-1-phosphate (MTRu-1-P). The polypeptide is Methylthioribose-1-phosphate isomerase (Yersinia pseudotuberculosis serotype IB (strain PB1/+)).